The following is a 166-amino-acid chain: 6,7-dimethyl-8-ribityllumazine synthase (166 aa).

5-amino-6-(D-ribitylamino)uracil contacts are provided by residues phenylalanine 24, 58-60 (ALE), and 82-84 (AVV). 87–88 (ET) is a binding site for (2S)-2-hydroxy-3-oxobutyl phosphate. Residue histidine 90 is the Proton donor of the active site. Residue asparagine 115 participates in 5-amino-6-(D-ribitylamino)uracil binding. Residue arginine 129 participates in (2S)-2-hydroxy-3-oxobutyl phosphate binding.

It belongs to the DMRL synthase family.

It catalyses the reaction (2S)-2-hydroxy-3-oxobutyl phosphate + 5-amino-6-(D-ribitylamino)uracil = 6,7-dimethyl-8-(1-D-ribityl)lumazine + phosphate + 2 H2O + H(+). The protein operates within cofactor biosynthesis; riboflavin biosynthesis; riboflavin from 2-hydroxy-3-oxobutyl phosphate and 5-amino-6-(D-ribitylamino)uracil: step 1/2. Functionally, catalyzes the formation of 6,7-dimethyl-8-ribityllumazine by condensation of 5-amino-6-(D-ribitylamino)uracil with 3,4-dihydroxy-2-butanone 4-phosphate. This is the penultimate step in the biosynthesis of riboflavin. In Cupriavidus necator (strain ATCC 17699 / DSM 428 / KCTC 22496 / NCIMB 10442 / H16 / Stanier 337) (Ralstonia eutropha), this protein is 6,7-dimethyl-8-ribityllumazine synthase.